The sequence spans 176 residues: Ribosome maturation factor RimP (176 aa).

The protein belongs to the RimP family.

The protein resides in the cytoplasm. Its function is as follows. Required for maturation of 30S ribosomal subunits. The protein is Ribosome maturation factor RimP of Mycolicibacterium vanbaalenii (strain DSM 7251 / JCM 13017 / BCRC 16820 / KCTC 9966 / NRRL B-24157 / PYR-1) (Mycobacterium vanbaalenii).